A 920-amino-acid polypeptide reads, in one-letter code: Nitrate reductase [NADH] (920 aa).

Residues methionine 1–alanine 69 form a disordered region. The segment covering aspartate 60–alanine 69 has biased composition (acidic residues). Position 185 (cysteine 185) interacts with Mo-molybdopterin. The region spanning serine 534–isoleucine 609 is the Cytochrome b5 heme-binding domain. Residues histidine 569 and histidine 592 each contribute to the heme site. Residues arginine 663–methionine 775 form the FAD-binding FR-type domain. FAD-binding positions include arginine 715–threonine 718, leucine 732–tyrosine 736, phenylalanine 737, phenylalanine 744, leucine 749–serine 751, and threonine 802.

Belongs to the nitrate reductase family. In terms of assembly, homodimer. FAD serves as cofactor. Requires heme as cofactor. Mo-molybdopterin is required as a cofactor. As to expression, in cortical cells of roots grown at low nitrate concentrations, in vascular tissues of roots at high nitrate concentrations and in root apex under both conditions.

The enzyme catalyses nitrite + NAD(+) + H2O = nitrate + NADH + H(+). In terms of biological role, nitrate reductase is a key enzyme involved in the first step of nitrate assimilation in plants, fungi and bacteria. The polypeptide is Nitrate reductase [NADH] (NIA) (Cichorium intybus (Chicory)).